The primary structure comprises 244 residues: Large ribosomal subunit protein uL30w (244 aa).

The protein belongs to the universal ribosomal protein uL30 family.

The polypeptide is Large ribosomal subunit protein uL30w (RPL7D) (Arabidopsis thaliana (Mouse-ear cress)).